The chain runs to 346 residues: Peroxidase 19 (346 aa).

Positions Met1–Ser31 are cleaved as a signal peptide. 4 disulfide bridges follow: Cys51/Cys134, Cys84/Cys89, Cys140/Cys342, and Cys219/Cys251. The Proton acceptor role is filled by His82. 5 residues coordinate Ca(2+): Asp83, Val86, Gly88, Asp90, and Ser92. Position 182 (Pro182) interacts with substrate. N-linked (GlcNAc...) asparagine glycosylation is present at Asn185. Heme b is bound at residue His212. Thr213 lines the Ca(2+) pocket. Residues Asp265, Thr268, and Asp273 each coordinate Ca(2+).

Belongs to the peroxidase family. Classical plant (class III) peroxidase subfamily. Heme b serves as cofactor. The cofactor is Ca(2+).

It is found in the secreted. It catalyses the reaction 2 a phenolic donor + H2O2 = 2 a phenolic radical donor + 2 H2O. Removal of H(2)O(2), oxidation of toxic reductants, biosynthesis and degradation of lignin, suberization, auxin catabolism, response to environmental stresses such as wounding, pathogen attack and oxidative stress. These functions might be dependent on each isozyme/isoform in each plant tissue. The protein is Peroxidase 19 (PER19) of Arabidopsis thaliana (Mouse-ear cress).